Here is a 585-residue protein sequence, read N- to C-terminus: Glutamate decarboxylase 2 (585 aa).

The tract at residues 1–25 (MASPGSGFWSFGSEDGSGDPENPST) is disordered. Residues Ser3, Ser6, Ser10, and Ser13 each carry the phosphoserine modification. S-palmitoyl cysteine attachment occurs at residues Cys30 and Cys45. 181-183 (QLS) is a binding site for substrate. Lys396 carries the post-translational modification N6-(pyridoxal phosphate)lysine. Arg558 is a substrate binding site.

The protein belongs to the group II decarboxylase family. In terms of assembly, homodimer. Requires pyridoxal 5'-phosphate as cofactor. Phosphorylated; which does not affect kinetic parameters or subcellular location. In terms of processing, palmitoylated; which is required for presynaptic clustering.

The protein resides in the cytoplasm. Its subcellular location is the cytosol. It is found in the cytoplasmic vesicle. The protein localises to the presynaptic cell membrane. It localises to the golgi apparatus membrane. The enzyme catalyses L-glutamate + H(+) = 4-aminobutanoate + CO2. Its function is as follows. Catalyzes the production of GABA. This chain is Glutamate decarboxylase 2 (GAD2), found in Canis lupus familiaris (Dog).